Here is a 485-residue protein sequence, read N- to C-terminus: MTTSGVRVRIAPSPTGEPHVGTAYIALFNYLFAKKHGGEFILRIEDTDATRSTLEYEQKVLEALRWTGLTWSEGPDVGGPYGPYRQSERKPMYWPYAEELLEKGHAFRCFCTPERLEQMREAQRAAGKPPKYDGLCLHLKAEEVTTRVAAGEANVVRMKIPTEGSCDFHDGVYGDVSIPWDSVDMQVLIKADGMPTYHMANVIDDHLMKITHVARGEEWLASVPKHILLYRYFGWDQPTFMHLSLMRNADKSKLSKRKNPTSISYYSALGYLPEALMNFLGLFFIQIAEGEELLTMEELAAKFDPEALSKAGAIFDIQKLDWLNGRWLREKLTPEDFIARTLEWAMENSRLTEGLKLAQSRISKLGELPNLAGFLVSSDVGLTPASFAGLKSKPEEIHEILTTVAADLEKMPDWNVEAIEAELRDIAERTGKKLRVVTPPLFVAVSGSSRSLPLFDSMALLGRSVVRQRLKVAIAVVATMVGSGS.

A 'HIGH' region motif is present at residues 12–22; it reads PSPTGEPHVGT. Cys109, Cys111, Cys136, and His138 together coordinate Zn(2+). Positions 253–257 match the 'KMSKS' region motif; it reads KLSKR. Lys256 is a binding site for ATP.

This sequence belongs to the class-I aminoacyl-tRNA synthetase family. Glutamate--tRNA ligase type 1 subfamily. In terms of assembly, monomer. Zn(2+) serves as cofactor.

It localises to the cytoplasm. The catalysed reaction is tRNA(Glu) + L-glutamate + ATP = L-glutamyl-tRNA(Glu) + AMP + diphosphate. Functionally, catalyzes the attachment of glutamate to tRNA(Glu) in a two-step reaction: glutamate is first activated by ATP to form Glu-AMP and then transferred to the acceptor end of tRNA(Glu). This chain is Glutamate--tRNA ligase, found in Agrobacterium fabrum (strain C58 / ATCC 33970) (Agrobacterium tumefaciens (strain C58)).